Reading from the N-terminus, the 117-residue chain is Replication initiation control protein YabA (117 aa).

Zn(2+) is bound by residues H87, C89, C103, and C106.

Belongs to the YabA family. In terms of assembly, homotetramer. Interacts with both DnaA and DnaN, acting as a bridge between these two proteins. The cofactor is Zn(2+).

Its subcellular location is the cytoplasm. It localises to the nucleoid. Involved in control of chromosome replication initiation. Inhibits the cooperative binding of DnaA to the oriC region, thus negatively regulating initiation of chromosome replication. Inhibits the ability of DnaA-ATP to form a helix on DNA; does not disassemble preformed DnaA-DNA helices. Decreases the residence time of DnaA on the chromosome at its binding sites (oriC, replication forks and promoter-binding sites). Tethers DnaA to the replication machinery via the DNA polymerase beta sliding clamp subunit (dnaN). Associates with oriC and other DnaA targets on the chromosome in a DnaA-dependent manner. In Latilactobacillus sakei subsp. sakei (strain 23K) (Lactobacillus sakei subsp. sakei), this protein is Replication initiation control protein YabA.